A 233-amino-acid polypeptide reads, in one-letter code: Adenosine 5'-phosphosulfate reductase (233 aa).

Residues cysteine 120, cysteine 121, cysteine 203, and cysteine 206 each contribute to the [4Fe-4S] cluster site. Catalysis depends on cysteine 229, which acts as the Nucleophile; cysteine thiosulfonate intermediate.

The protein belongs to the PAPS reductase family. CysH subfamily. The cofactor is [4Fe-4S] cluster.

The protein localises to the cytoplasm. The enzyme catalyses [thioredoxin]-disulfide + sulfite + AMP + 2 H(+) = adenosine 5'-phosphosulfate + [thioredoxin]-dithiol. It functions in the pathway sulfur metabolism; hydrogen sulfide biosynthesis; sulfite from sulfate. Functionally, catalyzes the formation of sulfite from adenosine 5'-phosphosulfate (APS) using thioredoxin as an electron donor. The polypeptide is Adenosine 5'-phosphosulfate reductase (Lysinibacillus sphaericus (strain C3-41)).